We begin with the raw amino-acid sequence, 1172 residues long: DNA-directed RNA polymerase subunit beta (1172 aa).

Belongs to the RNA polymerase beta chain family. As to quaternary structure, the RNAP catalytic core consists of 2 alpha, 1 beta, 1 beta' and 1 omega subunit. When a sigma factor is associated with the core the holoenzyme is formed, which can initiate transcription.

It carries out the reaction RNA(n) + a ribonucleoside 5'-triphosphate = RNA(n+1) + diphosphate. DNA-dependent RNA polymerase catalyzes the transcription of DNA into RNA using the four ribonucleoside triphosphates as substrates. The protein is DNA-directed RNA polymerase subunit beta of Mycobacterium sp. (strain KMS).